A 428-amino-acid polypeptide reads, in one-letter code: AP-1 complex subunit mu (428 aa).

Residue Ala2 is modified to N-acetylalanine; partial. Residues 169–426 (KNEVFLDVVE…VCLSGDYQFR (258 aa)) enclose the MHD domain.

Belongs to the adaptor complexes medium subunit family. In terms of assembly, adaptor protein complex 1 (AP-1) is a heterotetramer composed of two large adaptins (gamma-type subunit and beta-type subunit), a medium adaptin (mu-type subunit) and a small adaptin (sigma-type subunit).

It is found in the golgi apparatus. Its subcellular location is the trans-Golgi network. It localises to the cytoplasmic vesicle. The protein resides in the clathrin-coated vesicle membrane. Functionally, subunit of clathrin-associated adaptor protein complex 1 that plays a role in protein sorting in the trans-Golgi network (TGN) and endosomes. The AP complexes mediate the recruitment of clathrin to membranes and the recognition of sorting signals within the cytosolic tails of transmembrane cargo molecules. Also involved in early steps of phagocytosis and macropinocytosis. The chain is AP-1 complex subunit mu (apm1) from Dictyostelium discoideum (Social amoeba).